Reading from the N-terminus, the 507-residue chain is ATP synthase subunit alpha (507 aa).

169-176 (GDRQTGKT) provides a ligand contact to ATP.

Belongs to the ATPase alpha/beta chains family. As to quaternary structure, F-type ATPases have 2 components, CF(1) - the catalytic core - and CF(0) - the membrane proton channel. CF(1) has five subunits: alpha(3), beta(3), gamma(1), delta(1), epsilon(1). CF(0) has three main subunits: a(1), b(2) and c(9-12). The alpha and beta chains form an alternating ring which encloses part of the gamma chain. CF(1) is attached to CF(0) by a central stalk formed by the gamma and epsilon chains, while a peripheral stalk is formed by the delta and b chains. In this bacterium the a and b subunits are transcribed but do not seem to be translated, thus the ATP synthase consists of the alpha, beta, gamma, delta, epsilon and c subunits.

The protein localises to the cell membrane. It carries out the reaction ATP + H2O + 4 H(+)(in) = ADP + phosphate + 5 H(+)(out). In terms of biological role, produces ATP from ADP in the presence of a proton gradient across the membrane. The alpha chain is a regulatory subunit. The sequence is that of ATP synthase subunit alpha from Moorella thermoacetica (strain ATCC 39073 / JCM 9320).